The primary structure comprises 508 residues: Monocarboxylate transporter 9 (508 aa).

Helical transmembrane passes span 13 to 33, 53 to 73, 80 to 100, 102 to 122, 137 to 157, and 164 to 184; these read WVIV…PLAV, WVGS…SLFV, PVTI…SLAP, IYFL…LLYT, GLAL…YAAL, and FYGL…ILAC. Residues 242-263 are disordered; the sequence is GDWGRETSLPKNPTGAAHTKEP. The next 6 membrane-spanning stretches (helical) occupy residues 303-323, 341-361, 370-390, 396-416, 431-451, and 460-480; these read VFSA…PPSL, IPLI…LGIL, LYLY…IPLA, LAIL…FPYV, GILM…VGWF, and IAFY…LLAI.

It belongs to the major facilitator superfamily. Monocarboxylate porter (TC 2.A.1.13) family. Expressed in the liver and kidneys. In the liver localizes on the sinusoidal membrane of the hepatocytes.

It localises to the cell membrane. The catalysed reaction is creatine(in) = creatine(out). It carries out the reaction (R)-carnitine(in) = (R)-carnitine(out). Its function is as follows. Extracellular pH-and Na(+)-sensitive low-affinity creatine transporter. Also functions as a pH-independent carnitine efflux transporter. This chain is Monocarboxylate transporter 9 (Slc16a9), found in Rattus norvegicus (Rat).